Consider the following 747-residue polypeptide: DNA-directed RNA polymerase subunit beta' (747 aa).

Residues Cys70, Cys72, Cys97, and Cys100 each coordinate Zn(2+). Mg(2+) is bound by residues Asp502, Asp504, and Asp506.

The protein belongs to the RNA polymerase beta' chain family. RpoC1 subfamily. In plastids the minimal PEP RNA polymerase catalytic core is composed of four subunits: alpha, beta, beta', and beta''. When a (nuclear-encoded) sigma factor is associated with the core the holoenzyme is formed, which can initiate transcription. The cofactor is Mg(2+). Zn(2+) is required as a cofactor.

It localises to the plastid. The protein localises to the chloroplast. The enzyme catalyses RNA(n) + a ribonucleoside 5'-triphosphate = RNA(n+1) + diphosphate. Functionally, DNA-dependent RNA polymerase catalyzes the transcription of DNA into RNA using the four ribonucleoside triphosphates as substrates. The chain is DNA-directed RNA polymerase subunit beta' from Gnetum parvifolium (Small-leaved jointfir).